Here is a 201-residue protein sequence, read N- to C-terminus: LIM domain-containing protein PLIM2b (201 aa).

LIM zinc-binding domains lie at 8–68 (DKCT…LFKE) and 103–163 (DKCA…LFME). Residues 171–201 (KKKSESQEVLPEVVPEEQPAPPPPDENREDN) form a disordered region. The segment covering 177–187 (QEVLPEVVPEE) has biased composition (low complexity).

As to quaternary structure, interacts with NEK3.

The sequence is that of LIM domain-containing protein PLIM2b from Oryza sativa subsp. japonica (Rice).